The sequence spans 407 residues: MFSKIIQSYAKGNLIIQICAGIALGILIGINSKEISEIANLLGILFTSALKAIAPMLVFILILTSICTKDFSQSGVKIKNIIILYIVGTFLASACAILANFFFPVKLVLDGIQATTNPSPAHMGEIFKDLLFKIVDNPINALSSGNYLGILTWAIAGGAALKHCSNEAKQVFIDINEGVLKIVKFVVKLAPFGIFGLVANSVAQTGAQGLLSYTKLLILLVATMLFVTFVINALIVFFYTRKNPFPLIFICLRHSAFFAFFTRSSAANIPVNMALCAKLGIDKEFYGISIPLGATINMAGAAVTIAILSLTAANTVGIEISLLQAFLLSIIATFAASGASGVAGGSLLLIPLACSLFNIDYDIAMKVVAIGFIIGVIQDSVETALNSSTDVLFTAICSKNELNYNIK.

9 helical membrane-spanning segments follow: residues 10–30, 42–62, 81–101, 141–161, 179–199, 218–238, 245–267, 288–308, and 316–336; these read AKGN…LIGI, LGIL…FILI, IIIL…LANF, ALSS…GAAL, VLKI…GLVA, ILLV…IVFF, FPLI…SSAA, ISIP…IAIL, and VGIE…TFAA.

Belongs to the dicarboxylate/amino acid:cation symporter (DAACS) (TC 2.A.23) family.

It localises to the cell inner membrane. It catalyses the reaction L-serine(in) + Na(+)(in) = L-serine(out) + Na(+)(out). It carries out the reaction L-threonine(in) + Na(+)(in) = L-threonine(out) + Na(+)(out). In terms of biological role, involved in the import of serine and threonine into the cell, with the concomitant import of sodium (symport system). This chain is Serine/threonine transporter SstT, found in Campylobacter jejuni subsp. doylei (strain ATCC BAA-1458 / RM4099 / 269.97).